The following is a 73-amino-acid chain: Translation initiation factor IF-1 (73 aa).

Positions 1 to 73 (MAKKEGALEL…TRGRIVYRHK (73 aa)) constitute an S1-like domain.

This sequence belongs to the IF-1 family. In terms of assembly, component of the 30S ribosomal translation pre-initiation complex which assembles on the 30S ribosome in the order IF-2 and IF-3, IF-1 and N-formylmethionyl-tRNA(fMet); mRNA recruitment can occur at any time during PIC assembly.

The protein localises to the cytoplasm. One of the essential components for the initiation of protein synthesis. Stabilizes the binding of IF-2 and IF-3 on the 30S subunit to which N-formylmethionyl-tRNA(fMet) subsequently binds. Helps modulate mRNA selection, yielding the 30S pre-initiation complex (PIC). Upon addition of the 50S ribosomal subunit IF-1, IF-2 and IF-3 are released leaving the mature 70S translation initiation complex. This Cutibacterium acnes (strain DSM 16379 / KPA171202) (Propionibacterium acnes) protein is Translation initiation factor IF-1.